The following is a 280-amino-acid chain: Large ribosomal subunit protein uL2 (280 aa).

The disordered stretch occupies residues 213–280 (RWKGKRPSVR…RRRTGKKHAR (68 aa)). Residues 268–280 (IVRRRRTGKKHAR) are compositionally biased toward basic residues.

It belongs to the universal ribosomal protein uL2 family. In terms of assembly, part of the 50S ribosomal subunit. Forms a bridge to the 30S subunit in the 70S ribosome.

Functionally, one of the primary rRNA binding proteins. Required for association of the 30S and 50S subunits to form the 70S ribosome, for tRNA binding and peptide bond formation. It has been suggested to have peptidyltransferase activity; this is somewhat controversial. Makes several contacts with the 16S rRNA in the 70S ribosome. In Mycobacterium leprae (strain Br4923), this protein is Large ribosomal subunit protein uL2.